A 622-amino-acid polypeptide reads, in one-letter code: Protein lev-9 (622 aa).

An N-terminal signal peptide occupies residues 1–16; sequence MRFLLLLAISITYASA. A WAP; atypical domain is found at 17 to 61; it reads LSCPEVTLSQRPKHCKKECIADEDCKRNKRCMCDGECGLSCVNPI. 19 disulfides stabilise this stretch: Cys19/Cys49, Cys35/Cys47, Cys41/Cys57, Cys64/Cys105, Cys91/Cys118, Cys124/Cys171, Cys154/Cys188, Cys193/Cys233, Cys219/Cys246, Cys251/Cys291, Cys277/Cys304, Cys309/Cys349, Cys335/Cys362, Cys366/Cys409, Cys395/Cys420, Cys425/Cys467, Cys452/Cys481, Cys486/Cys543, and Cys529/Cys556. 8 Sushi domains span residues 62 to 120, 122 to 190, 191 to 248, 249 to 306, 307 to 364, 365 to 422, 423 to 483, and 484 to 558; these read AMCH…VCRL, LKCG…RCKA, RACP…NCKA, TECS…RCEE, IRCS…RCLA, SCRV…VCSP, LSCH…KCLP, and SWCE…KCVS. N-linked (GlcNAc...) asparagine glycosylation occurs at Asn411. The propeptide occupies 576 to 622; sequence SLPGRAVREYVDDELSTHRQHSGKCGIVSGKLERMIMQHSDNGVSVC.

Post-translationally, proteolytic processing of the C-terminus is required for clustering activity but not for secretion nor traffic.

Its subcellular location is the synapse. The protein localises to the secreted. Scaffolding protein that is necessary to cluster acetylcholine receptors at neuromuscular junctions. This Caenorhabditis elegans protein is Protein lev-9 (lev-9).